We begin with the raw amino-acid sequence, 372 residues long: Protein zntB (372 aa).

A run of 3 helical transmembrane segments spans residues 15-35 (LIMC…VIFI), 42-62 (LLGH…FMDL), and 70-90 (IGFY…AVIL). The tract at residues 99–166 (ESGDSNHAHS…IAKSKNKKKS (68 aa)) is disordered. Positions 114–124 (IEKHSSEKKEV) are enriched in basic and acidic residues. A coiled-coil region spans residues 133 to 167 (NGKDKKQKQQKQKQQKQQQQQKQNIAKSKNKKKSK). Residues 137 to 146 (KKQKQQKQKQ) are compositionally biased toward basic residues. Positions 147–159 (QKQQQQQKQNIAK) are enriched in low complexity. The next 5 helical transmembrane spans lie at 170-192 (YLNS…EGVA), 207-229 (LMLA…IFSA), 237-257 (FKYC…FGLI), 271-291 (LAAV…PAAF), and 301-321 (FSNI…HSML). The segment at 328 to 372 (AGDGGHGHSHGGHGHSHGHGHSHGGHSHDSQHVESPQSSSFNAFA) is disordered. Residues 334 to 352 (GHSHGGHGHSHGHGHSHGG) are compositionally biased toward basic residues. Residues 360 to 372 (VESPQSSSFNAFA) show a composition bias toward polar residues.

The protein belongs to the ZIP transporter (TC 2.A.5) family. ZupT subfamily.

Its subcellular location is the membrane. Its function is as follows. May transport divalent cations. May participate, with dstA, in the regulation of the differentiation of stalk cells during development. In Dictyostelium discoideum (Social amoeba), this protein is Protein zntB (zntB).